We begin with the raw amino-acid sequence, 243 residues long: uncharacterized protein (243 aa).

The segment covering 1-18 (MSNSHYNNYQQQQPHSSN) has biased composition (low complexity). The tract at residues 1 to 30 (MSNSHYNNYQQQQPHSSNGDPEYQHQQMVH) is disordered. The AMMECR1 domain maps to 38–232 (GHGMKTVAVP…MHYKEYREYQ (195 aa)).

This is an uncharacterized protein from Drosophila melanogaster (Fruit fly).